A 173-amino-acid chain; its full sequence is Small ribosomal subunit protein uS7 (173 aa).

Belongs to the universal ribosomal protein uS7 family. Part of the 30S ribosomal subunit. Contacts proteins S9 and S11.

Its function is as follows. One of the primary rRNA binding proteins, it binds directly to 16S rRNA where it nucleates assembly of the head domain of the 30S subunit. Is located at the subunit interface close to the decoding center, probably blocks exit of the E-site tRNA. In Orientia tsutsugamushi (strain Boryong) (Rickettsia tsutsugamushi), this protein is Small ribosomal subunit protein uS7.